The following is a 496-amino-acid chain: ATP-dependent protease ATPase subunit HslU2 (496 aa).

The N-terminal 10 residues, 1 to 10 (MIRFSWVRLC), are a transit peptide targeting the mitochondrion. ATP-binding positions include Val51 and 94 to 99 (GVGKTE). The span at 177–191 (GSFGSSTRNSGSGDS) shows a compositional bias: low complexity. The disordered stretch occupies residues 177-204 (GSFGSSTRNSGSGDSSAEEDKNSSSRDN). ATP contacts are provided by Asp308, Glu374, and Arg446.

It belongs to the ClpX chaperone family. HslU subfamily. As to quaternary structure, a double ring-shaped homohexamer of HslV is capped on each side by a ring-shaped HslU homohexamer. The assembly of the HslU/HslV complex (HslVU) is dependent on binding of ATP.

Its subcellular location is the mitochondrion matrix. The protein localises to the kinetoplast. ATPase subunit of a proteasome-like degradation complex; this subunit has chaperone activity. The binding of ATP and its subsequent hydrolysis by HslU are essential for unfolding of protein substrates subsequently hydrolyzed by HslV. HslU recognizes the N-terminal part of its protein substrates and unfolds these before they are guided to HslV for hydrolysis. The HslVU protease complex functions in mitochondrial DNA replication by regulating DNA helicase PIF2 protein levels. The sequence is that of ATP-dependent protease ATPase subunit HslU2 (HslU2) from Trypanosoma brucei brucei (strain 927/4 GUTat10.1).